The chain runs to 612 residues: UBA domain-containing protein 6 (612 aa).

One can recognise a UBA domain in the interval 3 to 42; that stretch reads DLDTKIKTLKNMGVSESDAKDSLERCGYDVESAAEFIFSG. Position 595 is a phosphoserine (serine 595).

It localises to the cytoplasm. It is found in the nucleus. This is UBA domain-containing protein 6 (ucp6) from Schizosaccharomyces pombe (strain 972 / ATCC 24843) (Fission yeast).